A 697-amino-acid polypeptide reads, in one-letter code: Choline transporter-like protein 2 (697 aa).

Residues 1–30 (MDMEEKPKYGEPRKFDPSFKGPIQNRGCTD) are Cytoplasmic-facing. A helical transmembrane segment spans residues 31–51 (IVCCIIFIIAILGYLAVGILA). The Extracellular segment spans residues 52 to 226 (WTHGDPRKVI…KIFEDYTKSW (175 aa)). Asn113 and Asn204 each carry an N-linked (GlcNAc...) asparagine glycan. The helical transmembrane segment at 227-247 (YWILICLLIAVVLSLIFIVLL) threads the bilayer. Residues 248–249 (RF) are Cytoplasmic-facing. A helical membrane pass occupies residues 250 to 270 (LAGVMVWVMILMVVAVIAYGI). Topologically, residues 271-309 (AHCSIKYVSLKDTPGSNITLQQLGFQPDFAVYLHIRQTW) are extracellular. Asn287 carries N-linked (GlcNAc...) asparagine glycosylation. A helical membrane pass occupies residues 310-330 (LAFIIILAILELIIILLLIFL). Residues 331–353 (RNRIRVAVELMKEASRAIGYVMS) lie on the Cytoplasmic side of the membrane. The chain crosses the membrane as a helical span at residues 354-374 (SLVFPIFTFFLLAIVIAFWGV). Residues 375 to 435 (NAVFLSTSSE…YGGETPYHKY (61 aa)) lie on the Extracellular side of the membrane. Residues Asn391 and Asn406 are each glycosylated (N-linked (GlcNAc...) asparagine). A helical membrane pass occupies residues 436–456 (LILLQFYNVFLFFWCANFVTA). The Cytoplasmic portion of the chain corresponds to 457–498 (LGQMTLAGAFASYYWAFDKSKDMPAFPLCASLGRSLRYHTGS). A helical membrane pass occupies residues 499-519 (LAFGSLLLAIVQVIRVLLEYI). Over 520–593 (DHKLKGAENK…RVVVLDKVTD (74 aa)) the chain is Extracellular. The chain crosses the membrane as a helical span at residues 594–614 (FILFLGKLLIVGLVGIFAFFF). Over 615-632 (FSGQTDAFKGTAPSLHYY) the chain is Cytoplasmic. A helical transmembrane segment spans residues 633–653 (WVPILTVLVCSYLIAHGFFSV). Topologically, residues 654–697 (YAMCVDTLFLCFLEDLERNDGSAERPYLMSENLLNVLKKKNQAN) are extracellular.

This sequence belongs to the CTL (choline transporter-like) family.

Its subcellular location is the cell membrane. It localises to the mitochondrion outer membrane. The catalysed reaction is choline(out) + n H(+)(in) = choline(in) + n H(+)(out). It catalyses the reaction ethanolamine(out) + n H(+)(in) = ethanolamine(in) + n H(+)(out). Choline/H+ antiporter, mainly in mitochodria. Also acts as a low-affinity ethanolamine/H+ antiporter, regulating the supply of extracellular ethanolamine (Etn) for the CDP-Etn pathway, redistribute intracellular Etn and balance the CDP-Cho and CDP-Etn arms of the Kennedy pathway. In Danio rerio (Zebrafish), this protein is Choline transporter-like protein 2 (slc44a2).